Here is a 285-residue protein sequence, read N- to C-terminus: V-set and transmembrane domain-containing protein 2B (285 aa).

The signal sequence occupies residues 1–28; it reads MEQRNRLGALGYLLPLLLHSLLLFVADA. The 115-residue stretch at 29–143 folds into the Ig-like V-type domain; sequence TFTEVPKDVT…DDDTQEHKAQ (115 aa). Residues 29–263 lie on the Extracellular side of the membrane; it reads TFTEVPKDVT…HGSGTGPGYS (235 aa). A disulfide bridge connects residues Cys-49 and Cys-127. The tract at residues 160–225 is disordered; that stretch reads AEAVSHIQSS…AAAAAASATH (66 aa). Composition is skewed to low complexity over residues 176–189 and 208–225; these read ASSAVSSNNAGAAV and PAGSGVPEAAAAAASATH. Residues 264–284 traverse the membrane as a helical segment; it reads ADPLLSLLLLALHKFLHPLLG. Position 285 (His-285) is a topological domain, cytoplasmic.

Its subcellular location is the membrane. In Mus musculus (Mouse), this protein is V-set and transmembrane domain-containing protein 2B (Vstm2b).